The following is a 143-amino-acid chain: Large ribosomal subunit protein uL15 (143 aa).

The segment at M1–G52 is disordered. Residues R21–S31 are compositionally biased toward gly residues.

It belongs to the universal ribosomal protein uL15 family. As to quaternary structure, part of the 50S ribosomal subunit.

Functionally, binds to the 23S rRNA. This is Large ribosomal subunit protein uL15 from Francisella tularensis subsp. mediasiatica (strain FSC147).